The following is a 508-amino-acid chain: Pancreatic alpha-amylase (508 aa).

The N-terminal stretch at 1-15 is a signal peptide; sequence MKFVLLLSLIGFCWA. Gln-16 is modified (pyrrolidone carboxylic acid). 3 disulfides stabilise this stretch: Cys-43–Cys-101, Cys-85–Cys-130, and Cys-156–Cys-172. The Ca(2+) site is built by Asn-115, Arg-170, and Asp-179. Arg-207 lines the chloride pocket. The active-site Nucleophile is Asp-209. His-213 serves as a coordination point for Ca(2+). Glu-245 serves as the catalytic Proton donor. Residues Asn-310 and Arg-349 each contribute to the chloride site. 2 cysteine pairs are disulfide-bonded: Cys-390-Cys-396 and Cys-462-Cys-474.

The protein belongs to the glycosyl hydrolase 13 family. Monomer. Ca(2+) is required as a cofactor. The cofactor is chloride.

It localises to the secreted. The protein localises to the extracellular space. The enzyme catalyses Endohydrolysis of (1-&gt;4)-alpha-D-glucosidic linkages in polysaccharides containing three or more (1-&gt;4)-alpha-linked D-glucose units.. The chain is Pancreatic alpha-amylase (Amy2) from Rattus norvegicus (Rat).